A 779-amino-acid chain; its full sequence is LPS-assembly protein LptD (779 aa).

The N-terminal stretch at 1–23 (MKIRYSVLSTFIISALYSQDTQA) is a signal peptide.

It belongs to the LptD family. In terms of assembly, component of the lipopolysaccharide transport and assembly complex. Interacts with LptE and LptA.

The protein resides in the cell outer membrane. Together with LptE, is involved in the assembly of lipopolysaccharide (LPS) at the surface of the outer membrane. This Haemophilus ducreyi (strain 35000HP / ATCC 700724) protein is LPS-assembly protein LptD.